A 98-amino-acid chain; its full sequence is Large ribosomal subunit protein uL23 (98 aa).

The protein belongs to the universal ribosomal protein uL23 family. As to quaternary structure, part of the 50S ribosomal subunit. Contacts protein L29, and trigger factor when it is bound to the ribosome.

Functionally, one of the early assembly proteins it binds 23S rRNA. One of the proteins that surrounds the polypeptide exit tunnel on the outside of the ribosome. Forms the main docking site for trigger factor binding to the ribosome. The sequence is that of Large ribosomal subunit protein uL23 from Frankia casuarinae (strain DSM 45818 / CECT 9043 / HFP020203 / CcI3).